Here is a 400-residue protein sequence, read N- to C-terminus: ATP phosphoribosyltransferase regulatory subunit (400 aa).

This sequence belongs to the class-II aminoacyl-tRNA synthetase family. HisZ subfamily. Heteromultimer composed of HisG and HisZ subunits.

It is found in the cytoplasm. It participates in amino-acid biosynthesis; L-histidine biosynthesis; L-histidine from 5-phospho-alpha-D-ribose 1-diphosphate: step 1/9. Required for the first step of histidine biosynthesis. May allow the feedback regulation of ATP phosphoribosyltransferase activity by histidine. In Hahella chejuensis (strain KCTC 2396), this protein is ATP phosphoribosyltransferase regulatory subunit.